A 368-amino-acid polypeptide reads, in one-letter code: Histidinol-phosphate aminotransferase (368 aa).

Position 223 is an N6-(pyridoxal phosphate)lysine (lysine 223).

Belongs to the class-II pyridoxal-phosphate-dependent aminotransferase family. Histidinol-phosphate aminotransferase subfamily. As to quaternary structure, homodimer. Pyridoxal 5'-phosphate serves as cofactor.

It carries out the reaction L-histidinol phosphate + 2-oxoglutarate = 3-(imidazol-4-yl)-2-oxopropyl phosphate + L-glutamate. Its pathway is amino-acid biosynthesis; L-histidine biosynthesis; L-histidine from 5-phospho-alpha-D-ribose 1-diphosphate: step 7/9. This is Histidinol-phosphate aminotransferase (hisC) from Sinorhizobium fredii (strain NBRC 101917 / NGR234).